A 101-amino-acid chain; its full sequence is Small ribosomal subunit protein uS14 (101 aa).

It belongs to the universal ribosomal protein uS14 family. In terms of assembly, part of the 30S ribosomal subunit. Contacts proteins S3 and S10.

Its function is as follows. Binds 16S rRNA, required for the assembly of 30S particles and may also be responsible for determining the conformation of the 16S rRNA at the A site. The chain is Small ribosomal subunit protein uS14 from Shewanella denitrificans (strain OS217 / ATCC BAA-1090 / DSM 15013).